Reading from the N-terminus, the 189-residue chain is UPF0398 protein BH1768 (189 aa).

It belongs to the UPF0398 family.

The chain is UPF0398 protein BH1768 from Halalkalibacterium halodurans (strain ATCC BAA-125 / DSM 18197 / FERM 7344 / JCM 9153 / C-125) (Bacillus halodurans).